A 443-amino-acid polypeptide reads, in one-letter code: UDP-N-acetylmuramate--L-alanine ligase (443 aa).

Glycine 110–serine 116 contributes to the ATP binding site.

The protein belongs to the MurCDEF family.

Its subcellular location is the cytoplasm. The enzyme catalyses UDP-N-acetyl-alpha-D-muramate + L-alanine + ATP = UDP-N-acetyl-alpha-D-muramoyl-L-alanine + ADP + phosphate + H(+). The protein operates within cell wall biogenesis; peptidoglycan biosynthesis. Cell wall formation. The polypeptide is UDP-N-acetylmuramate--L-alanine ligase (Lactococcus lactis subsp. cremoris (strain MG1363)).